We begin with the raw amino-acid sequence, 244 residues long: uncharacterized protein (244 aa).

The tract at residues 30–49 is disordered; it reads RETNESPKSQNPSEEATTVN. A compositionally biased stretch (polar residues) spans 35-49; the sequence is SPKSQNPSEEATTVN. 4 helical membrane passes run 96 to 116, 128 to 148, 171 to 191, and 194 to 214; these read LWGT…LSNS, LLFI…FGLF, GFFI…TIAF, and FVTI…HPLS. The tract at residues 224–244 is disordered; the sequence is QLDGSGERKTDSSLVHQNPPN. Positions 235-244 are enriched in polar residues; it reads SSLVHQNPPN.

It is found in the nucleus membrane. This is an uncharacterized protein from Schizosaccharomyces pombe (strain 972 / ATCC 24843) (Fission yeast).